Here is a 490-residue protein sequence, read N- to C-terminus: UDP-glycosyltransferase 86A1 (490 aa).

UDP-alpha-D-glucose is bound by residues S294, 352 to 354 (CCQ), 369 to 377 (HCGWNSILE), and 391 to 394 (LTDQ).

The protein belongs to the UDP-glycosyltransferase family.

The protein is UDP-glycosyltransferase 86A1 (UGT86A1) of Arabidopsis thaliana (Mouse-ear cress).